The primary structure comprises 187 residues: Orotate phosphoribosyltransferase (187 aa).

5-phospho-alpha-D-ribose 1-diphosphate is bound by residues R99, K100, K103, H105, and D125 to S133. Orotate contacts are provided by T129 and R157.

It belongs to the purine/pyrimidine phosphoribosyltransferase family. PyrE subfamily. Homodimer. It depends on Mg(2+) as a cofactor.

It carries out the reaction orotidine 5'-phosphate + diphosphate = orotate + 5-phospho-alpha-D-ribose 1-diphosphate. Its pathway is pyrimidine metabolism; UMP biosynthesis via de novo pathway; UMP from orotate: step 1/2. In terms of biological role, catalyzes the transfer of a ribosyl phosphate group from 5-phosphoribose 1-diphosphate to orotate, leading to the formation of orotidine monophosphate (OMP). The chain is Orotate phosphoribosyltransferase from Leptospira borgpetersenii serovar Hardjo-bovis (strain JB197).